The primary structure comprises 281 residues: Eukaryotic translation initiation factor 3 subunit G (281 aa).

A disordered region spans residues 1–32 (MSRPAGRTDWAEEDDETELALPSQTVVKNKDG). Positions 202–280 (ATLRVTNVSE…LILRVEFAKK (79 aa)) constitute an RRM domain.

It belongs to the eIF-3 subunit G family. In terms of assembly, component of the eukaryotic translation initiation factor 3 (eIF-3) complex.

It is found in the cytoplasm. In terms of biological role, RNA-binding component of the eukaryotic translation initiation factor 3 (eIF-3) complex, which is involved in protein synthesis of a specialized repertoire of mRNAs and, together with other initiation factors, stimulates binding of mRNA and methionyl-tRNAi to the 40S ribosome. The eIF-3 complex specifically targets and initiates translation of a subset of mRNAs involved in cell proliferation. This subunit can bind 18S rRNA. The protein is Eukaryotic translation initiation factor 3 subunit G of Phaeosphaeria nodorum (strain SN15 / ATCC MYA-4574 / FGSC 10173) (Glume blotch fungus).